Consider the following 433-residue polypeptide: 4-hydroxy-3-methylbut-2-en-1-yl diphosphate synthase (flavodoxin) (433 aa).

Positions 1–13 (MNKPETVTENSLA) are enriched in polar residues. The interval 1–23 (MNKPETVTENSLASDVAGPAPRH) is disordered. Residues Cys314, Cys317, Cys360, and Glu367 each coordinate [4Fe-4S] cluster.

Belongs to the IspG family. Requires [4Fe-4S] cluster as cofactor.

It catalyses the reaction (2E)-4-hydroxy-3-methylbut-2-enyl diphosphate + oxidized [flavodoxin] + H2O + 2 H(+) = 2-C-methyl-D-erythritol 2,4-cyclic diphosphate + reduced [flavodoxin]. It functions in the pathway isoprenoid biosynthesis; isopentenyl diphosphate biosynthesis via DXP pathway; isopentenyl diphosphate from 1-deoxy-D-xylulose 5-phosphate: step 5/6. Functionally, converts 2C-methyl-D-erythritol 2,4-cyclodiphosphate (ME-2,4cPP) into 1-hydroxy-2-methyl-2-(E)-butenyl 4-diphosphate. This chain is 4-hydroxy-3-methylbut-2-en-1-yl diphosphate synthase (flavodoxin), found in Bradyrhizobium sp. (strain ORS 278).